The primary structure comprises 966 residues: C4 phosphoenolpyruvate carboxylase (966 aa).

The residue at position 11 (Ser-11) is a Phosphoserine. His-172 is an active-site residue. D-glucose 6-phosphate-binding residues include Trp-283, Arg-450, and Asp-597. The active site involves Lys-600. Arg-635 serves as a coordination point for D-glucose 6-phosphate. The active site involves Arg-641. Arg-641 is an L-aspartate binding site. Thr-665 is a D-glucose 6-phosphate binding site. Gln-673 contacts L-aspartate. Residues Arg-753 and 767–769 (RAI) each bind D-glucose 6-phosphate. L-aspartate is bound by residues Lys-829, Arg-888, and Asn-964.

This sequence belongs to the PEPCase type 1 family. In terms of assembly, homotetramer. Mg(2+) is required as a cofactor. In terms of tissue distribution, expressed in mesophyll cells, but not in bundle-sheath, roots, stems and flowers.

The protein localises to the cytoplasm. The catalysed reaction is oxaloacetate + phosphate = phosphoenolpyruvate + hydrogencarbonate. It functions in the pathway photosynthesis; C4 acid pathway. With respect to regulation, 5 fold activation by the allosteric regulator glucose-6-phosphate. Low sensitivity to inhibition by L-malate and L-aspartate. Up-regulated by light-reversible phosphorylation. In terms of biological role, forms oxaloacetate through the carboxylation of phosphoenolpyruvate (PEP). Catalyzes the first step of C4 photosynthesis. The polypeptide is C4 phosphoenolpyruvate carboxylase (Flaveria trinervia (Clustered yellowtops)).